The sequence spans 453 residues: Acyl-coenzyme A thioesterase 2, mitochondrial (453 aa).

A mitochondrion-targeting transit peptide spans 1 to 42; sequence MVASSFAVLRASRLCQQDWKSWARLFVPPPLSTGGRTTWART. An N6-acetyllysine modification is found at Lys-83. Residues Ser-273, Asp-365, and His-399 each act as charge relay system in the active site. An N6-succinyllysine modification is found at Lys-447.

The protein belongs to the C/M/P thioester hydrolase family. Monomer. In terms of tissue distribution, highly expressed in brown and white adipose tissue, muscle, heart, kidney, lung, adrenal gland and spleen; weakly expressed in intestine, testis and brain.

It is found in the mitochondrion matrix. It catalyses the reaction hexadecanoyl-CoA + H2O = hexadecanoate + CoA + H(+). It carries out the reaction tetradecanoyl-CoA + H2O = tetradecanoate + CoA + H(+). The catalysed reaction is octadecanoyl-CoA + H2O = octadecanoate + CoA + H(+). The enzyme catalyses eicosanoyl-CoA + H2O = eicosanoate + CoA + H(+). It catalyses the reaction decanoyl-CoA + H2O = decanoate + CoA + H(+). It carries out the reaction dodecanoyl-CoA + H2O = dodecanoate + CoA + H(+). The catalysed reaction is (9Z)-octadecenoyl-CoA + H2O = (9Z)-octadecenoate + CoA + H(+). The enzyme catalyses (9Z)-hexadecenoyl-CoA + H2O = (9Z)-hexadecenoate + CoA + H(+). It catalyses the reaction (9E)-octadecenoyl-CoA + H2O = (9E)-octadecenoate + CoA + H(+). It carries out the reaction (9Z,12Z)-octadecadienoyl-CoA + H2O = (9Z,12Z)-octadecadienoate + CoA + H(+). Its pathway is lipid metabolism; fatty acid metabolism. Catalyzes the hydrolysis of acyl-CoAs into free fatty acids and coenzyme A (CoASH), regulating their respective intracellular levels. Displays higher activity toward long chain acyl CoAs (C14-C20). The enzyme is involved in enhancing the hepatic fatty acid oxidation in mitochondria. The sequence is that of Acyl-coenzyme A thioesterase 2, mitochondrial (Acot2) from Mus musculus (Mouse).